An 806-amino-acid chain; its full sequence is Phenylalanine--tRNA ligase beta subunit (806 aa).

Positions 40-155 (NKGVKGVVVG…SDAEVGADAL (116 aa)) constitute a tRNA-binding domain. The 76-residue stretch at 409–484 (VQERTVSVTA…RLYGYDHIPV (76 aa)) folds into the B5 domain. Mg(2+)-binding residues include aspartate 462, aspartate 468, glutamate 471, and glutamate 472. An FDX-ACB domain is found at 712 to 805 (PRFPSMTRDM…VEEKFGAELR (94 aa)).

It belongs to the phenylalanyl-tRNA synthetase beta subunit family. Type 1 subfamily. Tetramer of two alpha and two beta subunits. Requires Mg(2+) as cofactor.

Its subcellular location is the cytoplasm. It carries out the reaction tRNA(Phe) + L-phenylalanine + ATP = L-phenylalanyl-tRNA(Phe) + AMP + diphosphate + H(+). The protein is Phenylalanine--tRNA ligase beta subunit of Bacillus cereus (strain ZK / E33L).